A 223-amino-acid chain; its full sequence is Cytidylate kinase (223 aa).

10 to 18 provides a ligand contact to ATP; that stretch reads GPASSGKST.

Belongs to the cytidylate kinase family. Type 1 subfamily.

The protein localises to the cytoplasm. The enzyme catalyses CMP + ATP = CDP + ADP. It catalyses the reaction dCMP + ATP = dCDP + ADP. This chain is Cytidylate kinase, found in Streptococcus pneumoniae serotype 4 (strain ATCC BAA-334 / TIGR4).